We begin with the raw amino-acid sequence, 612 residues long: Dihydroxy-acid dehydratase (612 aa).

A Mg(2+)-binding site is contributed by D81. [2Fe-2S] cluster is bound at residue C122. 2 residues coordinate Mg(2+): D123 and K124. Residue K124 is modified to N6-carboxylysine. Residue C193 participates in [2Fe-2S] cluster binding. E489 serves as a coordination point for Mg(2+). The active-site Proton acceptor is the S515.

Belongs to the IlvD/Edd family. As to quaternary structure, homodimer. The cofactor is [2Fe-2S] cluster. Requires Mg(2+) as cofactor.

It catalyses the reaction (2R)-2,3-dihydroxy-3-methylbutanoate = 3-methyl-2-oxobutanoate + H2O. It carries out the reaction (2R,3R)-2,3-dihydroxy-3-methylpentanoate = (S)-3-methyl-2-oxopentanoate + H2O. Its pathway is amino-acid biosynthesis; L-isoleucine biosynthesis; L-isoleucine from 2-oxobutanoate: step 3/4. It participates in amino-acid biosynthesis; L-valine biosynthesis; L-valine from pyruvate: step 3/4. Functionally, functions in the biosynthesis of branched-chain amino acids. Catalyzes the dehydration of (2R,3R)-2,3-dihydroxy-3-methylpentanoate (2,3-dihydroxy-3-methylvalerate) into 2-oxo-3-methylpentanoate (2-oxo-3-methylvalerate) and of (2R)-2,3-dihydroxy-3-methylbutanoate (2,3-dihydroxyisovalerate) into 2-oxo-3-methylbutanoate (2-oxoisovalerate), the penultimate precursor to L-isoleucine and L-valine, respectively. The protein is Dihydroxy-acid dehydratase of Xanthomonas oryzae pv. oryzae (strain MAFF 311018).